Here is a 282-residue protein sequence, read N- to C-terminus: Shikimate dehydrogenase (NADP(+)) (282 aa).

Shikimate contacts are provided by residues 16 to 18 (SLS) and threonine 63. Residue lysine 67 is the Proton acceptor of the active site. Residues asparagine 88 and aspartate 103 each contribute to the shikimate site. NADP(+) is bound by residues 128-132 (GAGGA) and leucine 219. Tyrosine 221 contacts shikimate. Residue glycine 243 participates in NADP(+) binding.

Belongs to the shikimate dehydrogenase family. In terms of assembly, homodimer.

The enzyme catalyses shikimate + NADP(+) = 3-dehydroshikimate + NADPH + H(+). It functions in the pathway metabolic intermediate biosynthesis; chorismate biosynthesis; chorismate from D-erythrose 4-phosphate and phosphoenolpyruvate: step 4/7. In terms of biological role, involved in the biosynthesis of the chorismate, which leads to the biosynthesis of aromatic amino acids. Catalyzes the reversible NADPH linked reduction of 3-dehydroshikimate (DHSA) to yield shikimate (SA). The polypeptide is Shikimate dehydrogenase (NADP(+)) (Xylella fastidiosa (strain M12)).